Here is a 226-residue protein sequence, read N- to C-terminus: Ornithine decarboxylase antizyme (226 aa).

It belongs to the ODC antizyme family. In terms of assembly, interacts with ODC and thereby sterically blocks ODC homodimerization.

In terms of biological role, ornithine decarboxylase (ODC) antizyme protein that negatively regulates ODC activity and intracellular polyamine biosynthesis in response to increased intracellular polyamine levels. Binds to ODC monomers, inhibiting the assembly of the functional ODC homodimer, and targets the monomers for ubiquitin-independent proteolytic destruction by the 26S proteasome. The polypeptide is Ornithine decarboxylase antizyme (spa1) (Schizosaccharomyces pombe (strain 972 / ATCC 24843) (Fission yeast)).